The chain runs to 357 residues: D-alanine--D-alanine ligase (357 aa).

The ATP-grasp domain occupies Lys-134–Asp-339. Asn-167–Glu-222 serves as a coordination point for ATP. Mg(2+)-binding residues include Asp-293, Glu-306, and Asn-308.

It belongs to the D-alanine--D-alanine ligase family. It depends on Mg(2+) as a cofactor. Requires Mn(2+) as cofactor.

It localises to the cytoplasm. It catalyses the reaction 2 D-alanine + ATP = D-alanyl-D-alanine + ADP + phosphate + H(+). Its pathway is cell wall biogenesis; peptidoglycan biosynthesis. Its function is as follows. Cell wall formation. In Staphylococcus epidermidis (strain ATCC 12228 / FDA PCI 1200), this protein is D-alanine--D-alanine ligase.